Here is a 224-residue protein sequence, read N- to C-terminus: Late embryogenesis abundant protein, group 3 (224 aa).

Disordered regions lie at residues 1 to 169 (MASN…KDKT) and 193 to 224 (NTLGMGGDNTITTKDNTTGATTKDTTTTTRNH). Over residues 13–23 (GETKARNEEKT) the composition is skewed to basic and acidic residues. 5 repeat units span residues 26–36 (VMGATKDKAGQ), 37–47 (TTEATKQKAGE), 48–58 (TTEATKQKAAE), 59–69 (TTEAAKQKASE), and 70–80 (TAEATKQKAAE). A 12 X 11 AA tandem repeats region spans residues 26–153 (VMGATKDKAG…TEAAKQKASE (128 aa)). 3 stretches are compositionally biased toward basic and acidic residues: residues 41 to 85 (TKQK…KDKT), 92 to 109 (AKEKTYETAQSAKERAAQ), and 120 to 151 (EKTEAAKQKAAETTEAARQKAAEATEAAKQKA). A 6; truncated repeat occupies 81–87 (AKDKTAQ). A run of 5 repeats spans residues 88 to 98 (TAQAAKEKTYE), 99 to 109 (TAQSAKERAAQ), 121 to 131 (KTEAAKQKAAE), 132 to 142 (TTEAARQKAAE), and 143 to 153 (ATEAAKQKASE). Residues 200–224 (DNTITTKDNTTGATTKDTTTTTRNH) are compositionally biased toward low complexity.

Belongs to the LEA type 4 family.

This Triticum aestivum (Wheat) protein is Late embryogenesis abundant protein, group 3.